Here is a 55-residue protein sequence, read N- to C-terminus: MPVTDPELVAIVQKRVLKKYVCRKCGALNPWGATKCRRCKSTNLRPKHYELGGKR.

It belongs to the eukaryotic ribosomal protein eL40 family.

This Ignicoccus hospitalis (strain KIN4/I / DSM 18386 / JCM 14125) protein is Large ribosomal subunit protein eL40.